A 420-amino-acid polypeptide reads, in one-letter code: CinA-like protein (420 aa).

It belongs to the CinA family.

This chain is CinA-like protein, found in Geotalea uraniireducens (strain Rf4) (Geobacter uraniireducens).